Consider the following 217-residue polypeptide: Probable transaldolase (217 aa).

Lysine 85 functions as the Schiff-base intermediate with substrate in the catalytic mechanism.

This sequence belongs to the transaldolase family. Type 3B subfamily.

The protein resides in the cytoplasm. The enzyme catalyses D-sedoheptulose 7-phosphate + D-glyceraldehyde 3-phosphate = D-erythrose 4-phosphate + beta-D-fructose 6-phosphate. Its pathway is carbohydrate degradation; pentose phosphate pathway; D-glyceraldehyde 3-phosphate and beta-D-fructose 6-phosphate from D-ribose 5-phosphate and D-xylulose 5-phosphate (non-oxidative stage): step 2/3. Transaldolase is important for the balance of metabolites in the pentose-phosphate pathway. The protein is Probable transaldolase of Brachyspira hyodysenteriae (strain ATCC 49526 / WA1).